The primary structure comprises 272 residues: uncharacterized protein (272 aa).

The next 2 helical transmembrane spans lie at 9-29 and 252-272; these read GGDIIFLMFTTLAAVSTASEH and SHISFLVPFFSVILVSLISFI.

The protein localises to the membrane. This is an uncharacterized protein from Caenorhabditis elegans.